Here is a 339-residue protein sequence, read N- to C-terminus: Undecaprenyl-phosphate 4-deoxy-4-formamido-L-arabinose transferase (339 aa).

The next 2 helical transmembrane spans lie at 235–255 (LSLV…FLLV) and 269–289 (LFVL…GMGL).

Belongs to the glycosyltransferase 2 family.

The protein resides in the cell inner membrane. It catalyses the reaction UDP-4-deoxy-4-formamido-beta-L-arabinose + di-trans,octa-cis-undecaprenyl phosphate = 4-deoxy-4-formamido-alpha-L-arabinopyranosyl di-trans,octa-cis-undecaprenyl phosphate + UDP. It participates in glycolipid biosynthesis; 4-amino-4-deoxy-alpha-L-arabinose undecaprenyl phosphate biosynthesis; 4-amino-4-deoxy-alpha-L-arabinose undecaprenyl phosphate from UDP-4-deoxy-4-formamido-beta-L-arabinose and undecaprenyl phosphate: step 1/2. Its pathway is bacterial outer membrane biogenesis; lipopolysaccharide biosynthesis. In terms of biological role, catalyzes the transfer of 4-deoxy-4-formamido-L-arabinose from UDP to undecaprenyl phosphate. The modified arabinose is attached to lipid A and is required for resistance to polymyxin and cationic antimicrobial peptides. This chain is Undecaprenyl-phosphate 4-deoxy-4-formamido-L-arabinose transferase, found in Pseudomonas aeruginosa (strain LESB58).